We begin with the raw amino-acid sequence, 160 residues long: Non-secretory ribonuclease (160 aa).

The signal sequence occupies residues 1–27; that stretch reads MVPKLFTSPICLLLLLGLMGVEGSLHA. Residue Trp34 is glycosylated (C-linked (Man) tryptophan). The active-site Proton acceptor is the His42. The N-linked (GlcNAc...) asparagine glycan is linked to Asn44. 4 disulfide bridges follow: Cys50-Cys110, Cys64-Cys122, Cys82-Cys137, and Cys89-Cys98. Tyr60 carries the 3'-nitrotyrosine modification. 65 to 69 is a binding site for substrate; that stretch reads KNQNT. N-linked (GlcNAc...) asparagine glycosylation is found at Asn92, Asn111, Asn118, and Asn138. His155 serves as the catalytic Proton donor.

This sequence belongs to the pancreatic ribonuclease family. Interacts with and forms a tight 1:1 complex with RNH1. Dimerization of two such complexes may occur.

The protein resides in the lysosome. The protein localises to the cytoplasmic granule. The enzyme catalyses an [RNA] containing cytidine + H2O = an [RNA]-3'-cytidine-3'-phosphate + a 5'-hydroxy-ribonucleotide-3'-[RNA].. The catalysed reaction is an [RNA] containing uridine + H2O = an [RNA]-3'-uridine-3'-phosphate + a 5'-hydroxy-ribonucleotide-3'-[RNA].. This is a non-secretory ribonuclease. It is a pyrimidine specific nuclease with a slight preference for U. Cytotoxin and helminthotoxin. Possesses a wide variety of biological activities. The polypeptide is Non-secretory ribonuclease (RNASE2) (Chlorocebus aethiops (Green monkey)).